A 70-amino-acid polypeptide reads, in one-letter code: Sec-independent protein translocase protein TatA (70 aa).

Residues M1 to G21 traverse the membrane as a helical segment. The tract at residues E47–G70 is disordered. Basic and acidic residues predominate over residues P57–G70.

This sequence belongs to the TatA/E family. As to quaternary structure, forms a complex with TatC.

The protein localises to the cell inner membrane. Part of the twin-arginine translocation (Tat) system that transports large folded proteins containing a characteristic twin-arginine motif in their signal peptide across membranes. TatA could form the protein-conducting channel of the Tat system. This chain is Sec-independent protein translocase protein TatA, found in Prosthecochloris aestuarii (strain DSM 271 / SK 413).